A 337-amino-acid polypeptide reads, in one-letter code: Transcription factor bHLH121 (337 aa).

In terms of domain architecture, bHLH spans 58 to 108 (ARKSQKAGREKLRREKLNEHFVELGNVLDPERPKNDKATILTDTVQLLKEL). The segment at 235–337 (VHIPQNPGNR…AGGQKPDDAK (103 aa)) is disordered. Composition is skewed to basic and acidic residues over residues 244 to 263 (RSREPRAKVSRESRSEKAED) and 280 to 291 (SDKDTLQRPEKT). The segment covering 297–317 (NNNNNSIEESSHSSKCSSSPS) has biased composition (low complexity).

As to quaternary structure, homodimer. Expressed constitutively in roots, leaves, stems, and flowers.

The protein resides in the nucleus. The polypeptide is Transcription factor bHLH121 (BHLH121) (Arabidopsis thaliana (Mouse-ear cress)).